The primary structure comprises 324 residues: Protein FAM228B (324 aa).

It belongs to the FAM228 family.

The chain is Protein FAM228B (FAM228B) from Homo sapiens (Human).